The chain runs to 124 residues: Holo-[acyl-carrier-protein] synthase (124 aa).

Residues Asp5 and Glu56 each contribute to the Mg(2+) site.

The protein belongs to the P-Pant transferase superfamily. AcpS family. It depends on Mg(2+) as a cofactor.

Its subcellular location is the cytoplasm. The enzyme catalyses apo-[ACP] + CoA = holo-[ACP] + adenosine 3',5'-bisphosphate + H(+). Transfers the 4'-phosphopantetheine moiety from coenzyme A to a Ser of acyl-carrier-protein. The chain is Holo-[acyl-carrier-protein] synthase from Campylobacter hominis (strain ATCC BAA-381 / DSM 21671 / CCUG 45161 / LMG 19568 / NCTC 13146 / CH001A).